Here is a 764-residue protein sequence, read N- to C-terminus: Semaphorin-3D (764 aa).

Residues 1–41 form the signal peptide; the sequence is MKTAGEPDRRRQRRQVRTGRFSCAWWSTSVMLFFSLPEGNC. A Sema domain is found at 48–535; sequence RVKLGYKDLI…GSDGLVQVSL (488 aa). C121 and C132 are disulfide-bonded. N143 carries N-linked (GlcNAc...) asparagine glycosylation. Intrachain disulfides connect C150–C159, C290–C402, and C314–C362. N490 carries N-linked (GlcNAc...) asparagine glycosylation. C538 and C556 are oxidised to a cystine. Residue N610 is glycosylated (N-linked (GlcNAc...) asparagine). Residues 661-740 enclose the Ig-like C2-type domain; the sequence is GDAGSYFCTS…EYCETMWHRE (80 aa). A disulfide bridge links C668 with C733. The disordered stretch occupies residues 743 to 764; sequence QKQKGKWKHVQELRKSRNRRHH.

The protein belongs to the semaphorin family.

It is found in the secreted. Functionally, may play a role in the guidance of several axon pathways. The polypeptide is Semaphorin-3D (sema3d) (Danio rerio (Zebrafish)).